A 146-amino-acid chain; its full sequence is Prefoldin subunit alpha (146 aa).

This sequence belongs to the prefoldin alpha subunit family. In terms of assembly, heterohexamer of two alpha and four beta subunits.

The protein localises to the cytoplasm. Molecular chaperone capable of stabilizing a range of proteins. Seems to fulfill an ATP-independent, HSP70-like function in archaeal de novo protein folding. The polypeptide is Prefoldin subunit alpha (Methanobrevibacter smithii (strain ATCC 35061 / DSM 861 / OCM 144 / PS)).